A 355-amino-acid chain; its full sequence is MDDNKKRALAAALGQIERQFGKGAVMRMGDHERTGIPAISTGSLGLDIALGIGGLPKGRIVEIYGPESSGKTTLTLSVIAEAQKSGATCAFVDAEHALDPEYAGKLGVNVDDLLVSQPDTGEQALEITDMLVRSNAVDVIIVDSVAALVPKAEIEGEMGDMHVGLQARLMSQALRKITGNIKNANCLVIFINQIRMKIGVMFGSPETTTGGNALKFYASVRLDIRRTGAVKEGDEVVGSETRVKIVKNKVSPPFRQAEFQILYGKGIYRNGEIIDLGVSQGLVEKSGAWYAYQGNKIGQGKANAAKYLQENPAIGAEIEKQIREKLLKAGVVAEAGKAAAADAKADDVADADAGY.

65-72 contacts ATP; it reads GPESSGKT.

It belongs to the RecA family.

It localises to the cytoplasm. Its function is as follows. Can catalyze the hydrolysis of ATP in the presence of single-stranded DNA, the ATP-dependent uptake of single-stranded DNA by duplex DNA, and the ATP-dependent hybridization of homologous single-stranded DNAs. It interacts with LexA causing its activation and leading to its autocatalytic cleavage. This Pseudomonas putida (strain W619) protein is Protein RecA.